A 128-amino-acid chain; its full sequence is Small ribosomal subunit protein uS13 (128 aa).

Positions glycine 85 to threonine 128 are disordered. Residues glycine 89–threonine 128 show a composition bias toward basic residues.

It belongs to the universal ribosomal protein uS13 family. In terms of assembly, part of the 30S ribosomal subunit. Forms a loose heterodimer with protein S19. Forms two bridges to the 50S subunit in the 70S ribosome.

In terms of biological role, located at the top of the head of the 30S subunit, it contacts several helices of the 16S rRNA. In the 70S ribosome it contacts the 23S rRNA (bridge B1a) and protein L5 of the 50S subunit (bridge B1b), connecting the 2 subunits; these bridges are implicated in subunit movement. Contacts the tRNAs in the A and P-sites. The protein is Small ribosomal subunit protein uS13 of Solibacter usitatus (strain Ellin6076).